Here is a 310-residue protein sequence, read N- to C-terminus: Probable manganese-dependent inorganic pyrophosphatase (310 aa).

Positions 10, 14, 16, 75, 97, and 149 each coordinate Mn(2+).

The protein belongs to the PPase class C family. Requires Mn(2+) as cofactor.

The protein resides in the cytoplasm. It catalyses the reaction diphosphate + H2O = 2 phosphate + H(+). The chain is Probable manganese-dependent inorganic pyrophosphatase from Clostridium acetobutylicum (strain ATCC 824 / DSM 792 / JCM 1419 / IAM 19013 / LMG 5710 / NBRC 13948 / NRRL B-527 / VKM B-1787 / 2291 / W).